A 466-amino-acid polypeptide reads, in one-letter code: Fumarate hydratase class II (466 aa).

Residues 99 to 101 (SGT), 129 to 132 (HPND), 139 to 141 (SSN), and Thr-187 contribute to the substrate site. The active-site Proton donor/acceptor is the His-188. The active site involves Ser-318. Substrate-binding positions include Ser-319 and 324–326 (KVN).

The protein belongs to the class-II fumarase/aspartase family. Fumarase subfamily. In terms of assembly, homotetramer.

It is found in the cytoplasm. The enzyme catalyses (S)-malate = fumarate + H2O. The protein operates within carbohydrate metabolism; tricarboxylic acid cycle; (S)-malate from fumarate: step 1/1. Functionally, involved in the TCA cycle. Catalyzes the stereospecific interconversion of fumarate to L-malate. This is Fumarate hydratase class II from Thermus aquaticus.